Reading from the N-terminus, the 398-residue chain is Unsaturated chondroitin disaccharide hydrolase (398 aa).

Catalysis depends on Asp-115, which acts as the Nucleophile. Substrate is bound by residues Asp-115, Asp-175, Gly-233, Thr-235, Arg-247, Trp-251, Ser-365, and Ser-368. The Proton donor role is filled by Asp-175.

It belongs to the glycosyl hydrolase 88 family. Monomer.

The catalysed reaction is beta-D-4-deoxy-Delta(4)-GlcpA-(1-&gt;3)-beta-D-GalpNAc6S + H2O = N-acetyl-beta-D-galactosamine 6-sulfate + 5-dehydro-4-deoxy-D-glucuronate. Its function is as follows. Catalyzes the hydrolysis of unsaturated hyaluronate and chondroitin disaccharides. Also degrades unsaturated heparin disaccharides. Releases 4-deoxy-4,5-didehydro D-glucuronic acid or 4-deoxy-4,5-didehydro L-iduronic acid from chondroitin disaccharides, hyaluronan disaccharides and heparin disaccharides and cleaves both glycosidic (1-&gt;3) and (1-&gt;4) bonds. Prefers sulfated glycosaminoglycans compared to unsulfated glycosaminoglycans. Probably required for mammalian cells invasion through the degradation of extracellular sulfated glycosaminoglycans such as chondroitin and hyaluronan. In Streptococcus agalactiae serotype III (strain NEM316), this protein is Unsaturated chondroitin disaccharide hydrolase.